The primary structure comprises 365 residues: NADH-quinone oxidoreductase subunit H 2 (365 aa).

8 consecutive transmembrane segments (helical) span residues 1 to 21 (MFVVLFVLTLILLYAVFVVWA), 71 to 91 (LAPVLIFTAIFAGFATLPFAP), 100 to 120 (VGVFFMITIVSLDVVGIFLAG), 136 to 156 (IAQVISYEIPLTLSILAVVLI), 199 to 219 (FVSWNAFKYPFLLLAYVVFFI), 254 to 274 (ILFLAEYAMMLLVAFLGVVLF), 301 to 321 (IAGYAWGLFWLISKGITVVFL), and 342 to 362 (WKILLPLSLFLVIVSGVWVVW).

This sequence belongs to the complex I subunit 1 family. As to quaternary structure, NDH-1 is composed of 14 different subunits. Subunits NuoA, H, J, K, L, M, N constitute the membrane sector of the complex.

It localises to the cell inner membrane. The catalysed reaction is a quinone + NADH + 5 H(+)(in) = a quinol + NAD(+) + 4 H(+)(out). Functionally, NDH-1 shuttles electrons from NADH, via FMN and iron-sulfur (Fe-S) centers, to quinones in the respiratory chain. The immediate electron acceptor for the enzyme in this species is believed to be ubiquinone. Couples the redox reaction to proton translocation (for every two electrons transferred, four hydrogen ions are translocated across the cytoplasmic membrane), and thus conserves the redox energy in a proton gradient. This subunit may bind ubiquinone. This chain is NADH-quinone oxidoreductase subunit H 2, found in Cytophaga hutchinsonii (strain ATCC 33406 / DSM 1761 / CIP 103989 / NBRC 15051 / NCIMB 9469 / D465).